Consider the following 174-residue polypeptide: Peptide deformylase (174 aa).

Residues Cys96 and His138 each contribute to the Fe cation site. Glu139 is a catalytic residue. His142 provides a ligand contact to Fe cation.

Belongs to the polypeptide deformylase family. Requires Fe(2+) as cofactor.

It catalyses the reaction N-terminal N-formyl-L-methionyl-[peptide] + H2O = N-terminal L-methionyl-[peptide] + formate. Its function is as follows. Removes the formyl group from the N-terminal Met of newly synthesized proteins. Requires at least a dipeptide for an efficient rate of reaction. N-terminal L-methionine is a prerequisite for activity but the enzyme has broad specificity at other positions. The polypeptide is Peptide deformylase (Helicobacter pylori (strain P12)).